The following is a 603-amino-acid chain: Methylenetetrahydrofolate reductase 1 (603 aa).

The Proton donor/acceptor role is filled by Glu21. NAD(+)-binding positions include 21–26 (EFFPPK) and 53–54 (TW). FAD is bound by residues 53–54 (TW), His82, 112–114 (RGD), 130–131 (YA), Tyr153, and Lys173. Substrate is bound at residue Asp114. The substrate site is built by Gln184 and Tyr276. Ser355 carries the phosphoserine modification.

The protein belongs to the methylenetetrahydrofolate reductase family. FAD is required as a cofactor.

It carries out the reaction (6S)-5-methyl-5,6,7,8-tetrahydrofolate + NADP(+) = (6R)-5,10-methylene-5,6,7,8-tetrahydrofolate + NADPH + H(+). The enzyme catalyses (6S)-5-methyl-5,6,7,8-tetrahydrofolate + NAD(+) = (6R)-5,10-methylene-5,6,7,8-tetrahydrofolate + NADH + H(+). It participates in one-carbon metabolism; tetrahydrofolate interconversion. In terms of biological role, major methylenetetrahydrofolate reductase required to generate the methyl groups necessary for methionine synthetase to convert homocysteine to methionine. Performs 80 to 85 percent of the total methylenetetrahydrofolate reductase activity of the cells. This is Methylenetetrahydrofolate reductase 1 (met9) from Schizosaccharomyces pombe (strain 972 / ATCC 24843) (Fission yeast).